Reading from the N-terminus, the 580-residue chain is Threonine--tRNA ligase (580 aa).

Residues 179–476 (DHRKIGKDLN…LLEQTKGILP (298 aa)) form a catalytic region. Zn(2+)-binding residues include Cys272, His323, and His453.

The protein belongs to the class-II aminoacyl-tRNA synthetase family. As to quaternary structure, homodimer. Zn(2+) serves as cofactor.

It is found in the cytoplasm. The catalysed reaction is tRNA(Thr) + L-threonine + ATP = L-threonyl-tRNA(Thr) + AMP + diphosphate + H(+). Catalyzes the attachment of threonine to tRNA(Thr) in a two-step reaction: L-threonine is first activated by ATP to form Thr-AMP and then transferred to the acceptor end of tRNA(Thr). Also edits incorrectly charged L-seryl-tRNA(Thr). This chain is Threonine--tRNA ligase, found in Ureaplasma parvum serovar 3 (strain ATCC 27815 / 27 / NCTC 11736).